A 131-amino-acid polypeptide reads, in one-letter code: U-scoloptoxin-Er5e (131 aa).

Positions 1–22 are cleaved as a signal peptide; that stretch reads MKTNCEFPLLCLLIVLVANVEG. Residues 23–94 constitute a propeptide that is removed on maturation; the sequence is EVEDNELKMV…KRLWRNWERR (72 aa). RLWRNWE repeat units follow at residues 34–40, 61–67, and 86–92; these read RLWRNWE. Gln-95 is modified (pyrrolidone carboxylic acid). One copy of the RLWRNWE 4; approximate repeat lies at 107–113; sequence ELWRNWE. A propeptide spanning residues 112–131 is cleaved from the precursor; the sequence is WEDLKRRQVVDLNDEQKTTG.

The protein belongs to the scoloptoxin-08 family. Expressed by the venom gland.

It is found in the secreted. The polypeptide is U-scoloptoxin-Er5e (Ethmostigmus rubripes (Giant centipede)).